Reading from the N-terminus, the 306-residue chain is Nucleotide-binding protein RSal33209_2275 (306 aa).

ATP is bound at residue 29–36; sequence GMSGAGRS. 80 to 83 is a GTP binding site; that stretch reads DVRG.

Belongs to the RapZ-like family.

Its function is as follows. Displays ATPase and GTPase activities. This chain is Nucleotide-binding protein RSal33209_2275, found in Renibacterium salmoninarum (strain ATCC 33209 / DSM 20767 / JCM 11484 / NBRC 15589 / NCIMB 2235).